The sequence spans 615 residues: Melanopsin-B (615 aa).

At 1 to 19 (MDMDRGFYRKVDVPDHAHY) the chain is on the extracellular side. Residues 20–40 (VIAFFVLIIGVVGVTGNALVM) form a helical membrane-spanning segment. At 41–56 (YAFLCNKKLRTPPNYF) the chain is on the cytoplasmic side. The chain crosses the membrane as a helical span at residues 57–77 (IMNLAVSDFLMAITQSPIFFI). At 78-93 (NSLFKEWIFGETGCRM) the chain is on the extracellular side. Residues Cys-91 and Cys-169 are joined by a disulfide bond. Residues 94 to 114 (YAFCGALFGITSMINLLAISL) form a helical membrane-spanning segment. The Cytoplasmic portion of the chain corresponds to 115 to 136 (DRYIVITKPPQAIRWVSGRRTM). The chain crosses the membrane as a helical span at residues 137-157 (VVILLVWLYSLAWSLAPLLGW). Topologically, residues 158–189 (SSYIPEGLMTSCTWDYVTSTPANKGYTLMLCC) are extracellular. The chain crosses the membrane as a helical span at residues 190 to 210 (FVFFIPLGIISYCYLCMFLAI). Residues 211 to 244 (RSAGREIERLGTQVRKSTLMQQQTIKTEWKLTKV) are Cytoplasmic-facing. Residues 245-265 (AFVVIIVYVHSWSPYACVTLI) form a helical membrane-spanning segment. The Extracellular portion of the chain corresponds to 266–279 (AWAGYGSHLSPYSK). The helical transmembrane segment at 280–300 (AVPAVIAKASAIYNPFIYAII) threads the bilayer. Lys-287 bears the N6-(retinylidene)lysine mark. The Cytoplasmic portion of the chain corresponds to 301–615 (HSKYRDTLAE…RNLEESFMAL (315 aa)). Disordered regions lie at residues 390 to 420 (LGRS…TVAD) and 465 to 502 (NKHP…QNHP). The segment covering 401–415 (AQQNRQTRSSDTLEQ) has biased composition (polar residues). Over residues 469-478 (NNNHKNHNNR) the composition is skewed to basic residues.

This sequence belongs to the G-protein coupled receptor 1 family. Opsin subfamily. As to expression, expressed in the inner nuclear layer of the retina, possibly in amacrine and ganglion cells. Expressed in a subpopulation of neurons in the dorsal habenula.

The protein localises to the cell membrane. Photoreceptor implicated in non-image-forming responses to light. This is Melanopsin-B (opn4b) from Gadus morhua (Atlantic cod).